Consider the following 338-residue polypeptide: MNSGRRSLMSATASLSLLLCIFTTFVVVSNGELQRFIEPAKSDGSVSFIVIGDWGRRGSFNQSLVAYQMGKIGEKIDLDFVVSTGDNFYDNGLFSEHDPNFEQSFSNIYTAPSLQKQWYSVLGNHDYRGDAEAQLSSVLREIDSRWICLRSFVVDAELVEMFFVDTTPFVKEYYTEADGHSYDWRAVPSRNSYVKALLRDLEVSLKSSKARWKIVVGHHAMRSIGHHGDTKELNEELLPILKENGVDLYMNGHDHCLQHMSDEDSPIQFLTSGAGSKAWRGDINPVTINPKLLKFYYDGQGFMSARFTHSDAEIVFYDVFGEILHKWVTSKQLLHSSV.

The N-terminal stretch at Met1–Gly31 is a signal peptide. A Fe cation-binding site is contributed by Asp53. N-linked (GlcNAc...) asparagine glycosylation is present at Asn61. Positions 86 and 89 each coordinate Fe cation. Asp86 contacts Zn(2+). Asn124 and His218 together coordinate Zn(2+). Residue His227 is the Proton donor of the active site. His253 serves as a coordination point for Zn(2+). A substrate-binding site is contributed by His253–His255. His255 contributes to the Fe cation binding site.

It belongs to the metallophosphoesterase superfamily. Purple acid phosphatase family. In terms of assembly, homodimer. Requires Fe cation as cofactor. Zn(2+) is required as a cofactor. In terms of tissue distribution, expressed in roots, stems, leaves, flowers and siliques.

The protein resides in the secreted. The enzyme catalyses a phosphate monoester + H2O = an alcohol + phosphate. The catalysed reaction is 2 a phenolic donor + H2O2 = 2 a phenolic radical donor + 2 H2O. Its activity is regulated as follows. Inhibited by phosphate and molybdate. Its function is as follows. Metallo-phosphoesterase involved in phosphate metabolism. Has a peroxidase activity. The protein is Purple acid phosphatase 17 (PAP17) of Arabidopsis thaliana (Mouse-ear cress).